We begin with the raw amino-acid sequence, 419 residues long: Probable G-protein coupled receptor 63 (419 aa).

Residues 1-81 (MVFSAVLTAF…AFKSLNLPLQ (81 aa)) are Extracellular-facing. 3 N-linked (GlcNAc...) asparagine glycosylation sites follow: Asn16, Asn28, and Asn62. The chain crosses the membrane as a helical span at residues 82 to 104 (ITLSAIMIFILFVSFLGNLVVCL). Over 105 to 115 (MVYQKAAMRSA) the chain is Cytoplasmic. A helical membrane pass occupies residues 116–138 (INILLASLAFADMLLAVLNMPFA). Over 139 to 157 (LVTILTTRWIFGKFFCRVS) the chain is Extracellular. The chain crosses the membrane as a helical span at residues 158–177 (AMFFWLFVIEGVAILLIISI). Residues 178–196 (DRFLIIVQRQDKLNPYRAK) lie on the Cytoplasmic side of the membrane. A helical membrane pass occupies residues 197 to 216 (VLIAVSWATSFCVAFPLAVG). Over 217-240 (NPDLQIPSRAPQCVFGYTTNPGYQ) the chain is Extracellular. Residues 241 to 263 (AYVILISLISFFIPFLVILYSFM) traverse the membrane as a helical segment. The Cytoplasmic portion of the chain corresponds to 264 to 315 (GILNTLRHNALRIHSYPEGICLSQASKLGLMSLQRPFQMSIDMGFKTRAFTT). A helical membrane pass occupies residues 316 to 338 (ILILFAVFIVCWAPFTTYSLVAT). The Extracellular segment spans residues 339–352 (FSKHFYYQHNFFEI). The chain crosses the membrane as a helical span at residues 353–375 (STWLLWLCYLKSALNPLIYYWRI). At 376 to 419 (KKFHDACLDMMPKSFKFLPQLPGHTKRRIRPSAVYVCGEHRTVV) the chain is on the cytoplasmic side.

The protein belongs to the G-protein coupled receptor 1 family. In terms of tissue distribution, expressed in brain; detected in the frontal cortex, with lower levels in the thalamus, caudate, hypothalamus and midbrain.

Its subcellular location is the cell membrane. In terms of biological role, orphan receptor. May play a role in brain function. The polypeptide is Probable G-protein coupled receptor 63 (GPR63) (Homo sapiens (Human)).